The primary structure comprises 279 residues: Phosphatidylglycerol--prolipoprotein diacylglyceryl transferase (279 aa).

3 consecutive transmembrane segments (helical) span residues 22 to 42, 52 to 72, and 89 to 109; these read WYGI…QAAL, LIDI…IYFV, and IWHG…SGII. Position 137 (arginine 137) interacts with a 1,2-diacyl-sn-glycero-3-phospho-(1'-sn-glycerol). 2 helical membrane passes run 203–223 and 235–255; these read LGET…FVEA and IRVA…FVIY.

This sequence belongs to the Lgt family.

Its subcellular location is the cell membrane. The enzyme catalyses L-cysteinyl-[prolipoprotein] + a 1,2-diacyl-sn-glycero-3-phospho-(1'-sn-glycerol) = an S-1,2-diacyl-sn-glyceryl-L-cysteinyl-[prolipoprotein] + sn-glycerol 1-phosphate + H(+). It functions in the pathway protein modification; lipoprotein biosynthesis (diacylglyceryl transfer). Its function is as follows. Catalyzes the transfer of the diacylglyceryl group from phosphatidylglycerol to the sulfhydryl group of the N-terminal cysteine of a prolipoprotein, the first step in the formation of mature lipoproteins. In Staphylococcus epidermidis (strain ATCC 35984 / DSM 28319 / BCRC 17069 / CCUG 31568 / BM 3577 / RP62A), this protein is Phosphatidylglycerol--prolipoprotein diacylglyceryl transferase.